The following is a 325-amino-acid chain: MSQPFVLAVPSKGRLQENAEAFFARAGLTLAKSGGARDYRGTIVGLDNVEVAYLSASEIAANLARGSVHFGVTGEDLIRESIVDADKRVALIDGLGFGRADVVVAVPQAWIDVRTMADLDDVTTGFRAQHNRRMRVATKYINLTRGFFASHGVVDYRIVESAGATEGAPAVGTAELIVDITTTGATLAANGLRVLDDGVMLRSQANLVASREADWTDATRETARIILDHIASRARAGKFKEVRTRFSGCNDALLAEAHAKFGVVSPFGGPTSSGMLTLHCPPAQLYGLSSFLRGHGAETVSVVSLDYVMDRENPLFAKLEAFLRS.

Belongs to the ATP phosphoribosyltransferase family. Long subfamily. Mg(2+) serves as cofactor.

Its subcellular location is the cytoplasm. It catalyses the reaction 1-(5-phospho-beta-D-ribosyl)-ATP + diphosphate = 5-phospho-alpha-D-ribose 1-diphosphate + ATP. It functions in the pathway amino-acid biosynthesis; L-histidine biosynthesis; L-histidine from 5-phospho-alpha-D-ribose 1-diphosphate: step 1/9. Feedback inhibited by histidine. Catalyzes the condensation of ATP and 5-phosphoribose 1-diphosphate to form N'-(5'-phosphoribosyl)-ATP (PR-ATP). Has a crucial role in the pathway because the rate of histidine biosynthesis seems to be controlled primarily by regulation of HisG enzymatic activity. This is ATP phosphoribosyltransferase from Rhodopseudomonas palustris (strain BisA53).